We begin with the raw amino-acid sequence, 396 residues long: S-adenosylmethionine synthase (396 aa).

His14 contributes to the ATP binding site. Asp16 is a binding site for Mg(2+). Glu42 provides a ligand contact to K(+). L-methionine-binding residues include Glu55 and Gln98. Positions 98 to 108 (QSPDIAQGVHG) are flexible loop. ATP-binding positions include 167-169 (DAK), 234-235 (RF), Asp243, 249-250 (RK), Ser266, and Lys270. Residue Asp243 coordinates L-methionine. An L-methionine-binding site is contributed by Lys274.

This sequence belongs to the AdoMet synthase family. As to quaternary structure, homotetramer; dimer of dimers. Mg(2+) is required as a cofactor. It depends on K(+) as a cofactor.

It is found in the cytoplasm. It carries out the reaction L-methionine + ATP + H2O = S-adenosyl-L-methionine + phosphate + diphosphate. It participates in amino-acid biosynthesis; S-adenosyl-L-methionine biosynthesis; S-adenosyl-L-methionine from L-methionine: step 1/1. Catalyzes the formation of S-adenosylmethionine (AdoMet) from methionine and ATP. The overall synthetic reaction is composed of two sequential steps, AdoMet formation and the subsequent tripolyphosphate hydrolysis which occurs prior to release of AdoMet from the enzyme. This chain is S-adenosylmethionine synthase, found in Treponema pallidum (strain Nichols).